Here is a 214-residue protein sequence, read N- to C-terminus: Probable nicotinate-nucleotide adenylyltransferase (214 aa).

This sequence belongs to the NadD family.

The enzyme catalyses nicotinate beta-D-ribonucleotide + ATP + H(+) = deamido-NAD(+) + diphosphate. It participates in cofactor biosynthesis; NAD(+) biosynthesis; deamido-NAD(+) from nicotinate D-ribonucleotide: step 1/1. Its function is as follows. Catalyzes the reversible adenylation of nicotinate mononucleotide (NaMN) to nicotinic acid adenine dinucleotide (NaAD). The polypeptide is Probable nicotinate-nucleotide adenylyltransferase (Buchnera aphidicola subsp. Acyrthosiphon pisum (strain 5A)).